The primary structure comprises 205 residues: Probable thymidylate kinase (205 aa).

7 to 14 (GIDGSGKS) is an ATP binding site.

This sequence belongs to the thymidylate kinase family.

The catalysed reaction is dTMP + ATP = dTDP + ADP. The chain is Probable thymidylate kinase from Methanoculleus marisnigri (strain ATCC 35101 / DSM 1498 / JR1).